The chain runs to 178 residues: Caveolin-1 (178 aa).

Ser-2 carries the post-translational modification N-acetylserine. Ser-2 is subject to Phosphoserine. A required for homooligomerization region spans residues 2–94 (SGGKYVDSEG…WKASFTTFTV (93 aa)). Residues 2 to 104 (SGGKYVDSEG…TKYWFYRLLS (103 aa)) are Cytoplasmic-facing. Lys-5 carries the N6-acetyllysine; alternate modification. Residue Lys-5 forms a Glycyl lysine isopeptide (Lys-Gly) (interchain with G-Cter in ubiquitin); alternate linkage. Residue Tyr-6 is modified to Phosphotyrosine. Ser-9 carries the phosphoserine modification. Tyr-14 is modified (phosphotyrosine; by ABL1). Tyr-25 carries the phosphotyrosine modification. Glycyl lysine isopeptide (Lys-Gly) (interchain with G-Cter in ubiquitin) cross-links involve residues Lys-26, Lys-30, Lys-39, Lys-47, and Lys-57. The segment at 82 to 94 (DGIWKASFTTFTV) is interaction with CAVIN3. Residues 105 to 125 (GIFGIPMALIWGVYFAILSFL) constitute an intramembrane region (helical). Topologically, residues 126–178 (HIWAVVPCIKSFLIEIQCISRVYSIYVHTFCDPLFEAIGKIFSNIRISTQKEI) are cytoplasmic. The interacts with SPRY1, SPRY2, SPRY3 and SPRY4 stretch occupies residues 131 to 142 (VPCIKSFLIEIQ). 3 S-palmitoyl cysteine lipidation sites follow: Cys-133, Cys-143, and Cys-156. The interval 149 to 160 (SIYVHTFCDPLF) is interacts with SPRY1, SPRY2, and SPRY4. Positions 167–178 (FSNIRISTQKEI) are interacts with SPRY1, SPRY2, SPRY3 and SPRY4.

It belongs to the caveolin family. Homooligomer. Interacts with GLIPR2. Interacts with NOSTRIN. Interacts with SNAP25 and STX1A. Interacts (via the N-terminus) with DPP4; the interaction is direct. Interacts with CTNNB1, CDH1 and JUP. Interacts with PACSIN2; this interaction induces membrane tubulation. Interacts with SLC7A9. Interacts with BMX and BTK. Interacts with TGFBR1. Interacts with CAVIN3 (via leucine-zipper domain) in a cholesterol-sensitive manner. Interacts with CAVIN1. Interacts with EHD2 in a cholesterol-dependent manner. Forms a ternary complex with UBXN6 and VCP; mediates CAV1 targeting to lysosomes for degradation. Interacts with ABCG1; this interaction regulates ABCG1-mediated cholesterol efflux. Interacts with NEU3; this interaction enhances NEU3 sialidase activity within caveola. Interacts (via C-terminus) with SPRY1, SPRY2 (via C-terminus), SPRY3, and SPRY4. Interacts with IGFBP5; this interaction allows trafficking of IGFBP5 from the plasma membrane to the nucleus. Post-translationally, phosphorylated at Tyr-14 by ABL1 in response to oxidative stress. Ubiquitinated. Undergo monoubiquitination and multi- and/or polyubiquitination. Monoubiquitination of N-terminal lysines promotes integration in a ternary complex with UBXN6 and VCP which promotes oligomeric CAV1 targeting to lysosomes for degradation. Ubiquitinated by ZNRF1; leading to degradation and modulation of the TLR4-mediated immune response.

The protein resides in the golgi apparatus membrane. It localises to the cell membrane. Its subcellular location is the membrane. The protein localises to the caveola. It is found in the membrane raft. Its function is as follows. May act as a scaffolding protein within caveolar membranes. Forms a stable heterooligomeric complex with CAV2 that targets to lipid rafts and drives caveolae formation. Mediates the recruitment of CAVIN proteins (CAVIN1/2/3/4) to the caveolae. Interacts directly with G-protein alpha subunits and can functionally regulate their activity. Involved in the costimulatory signal essential for T-cell receptor (TCR)-mediated T-cell activation. Its binding to DPP4 induces T-cell proliferation and NF-kappa-B activation in a T-cell receptor/CD3-dependent manner. Recruits CTNNB1 to caveolar membranes and may regulate CTNNB1-mediated signaling through the Wnt pathway. Negatively regulates TGFB1-mediated activation of SMAD2/3 by mediating the internalization of TGFBR1 from membrane rafts leading to its subsequent degradation. Binds 20(S)-hydroxycholesterol (20(S)-OHC). This Echinops telfairi (Lesser hedgehog tenrec) protein is Caveolin-1 (CAV1).